The chain runs to 320 residues: ATP-dependent 6-phosphofructokinase (320 aa).

Glycine 12 is a binding site for ATP. Residues 22–26 and 55–60 each bind ADP; these read RGVVR and RYSVSD. Residues 73–74 and 103–106 contribute to the ATP site; these read RF and GDGS. Aspartate 104 serves as a coordination point for Mg(2+). Residue 126–128 participates in substrate binding; that stretch reads TID. The Proton acceptor role is filled by aspartate 128. Arginine 155 contributes to the ADP binding site. Substrate is bound by residues arginine 163 and 170–172; that span reads MGR. ADP contacts are provided by residues 186–188, lysine 212, and 214–216; these read GCE and KKH. Residues glutamate 223, arginine 244, and 250–253 contribute to the substrate site; that span reads HIQR.

Belongs to the phosphofructokinase type A (PFKA) family. ATP-dependent PFK group I subfamily. Prokaryotic clade 'B1' sub-subfamily. Homotetramer. Requires Mg(2+) as cofactor.

It localises to the cytoplasm. It catalyses the reaction beta-D-fructose 6-phosphate + ATP = beta-D-fructose 1,6-bisphosphate + ADP + H(+). It participates in carbohydrate degradation; glycolysis; D-glyceraldehyde 3-phosphate and glycerone phosphate from D-glucose: step 3/4. Allosterically activated by ADP and other diphosphonucleosides, and allosterically inhibited by phosphoenolpyruvate. Functionally, catalyzes the phosphorylation of D-fructose 6-phosphate to fructose 1,6-bisphosphate by ATP, the first committing step of glycolysis. This chain is ATP-dependent 6-phosphofructokinase, found in Salmonella agona (strain SL483).